The following is a 731-amino-acid chain: Small conductance calcium-activated potassium channel protein 3 (731 aa).

Over residues 1-11 (MDTSGHFHDSG) the composition is skewed to basic and acidic residues. Disordered regions lie at residues 1 to 170 (MDTS…SNPF) and 239 to 258 (ATHN…FPKA). Positions 30–40 (QQQQQQQQQQQ) are enriched in low complexity. A compositionally biased stretch (pro residues) spans 41–51 (QPPPPAPPAAP). Over residues 52–95 (QQPLGPSLQPQPPQLQQQQQQQQQQQQQQPPHPLSQLAQLQSQP) the composition is skewed to low complexity. Polar residues predominate over residues 112–132 (PSSNSTAILHPSSRQGSQLNL). Over residues 138 to 147 (GHSPSSTATS) the composition is skewed to low complexity. Serine 167 bears the Phosphoserine mark. The segment covering 239–256 (ATHNHQHAGTTASSTTFP) has biased composition (polar residues). Residues 288–308 (LIFGMFGIVVMVIETELSWGL) traverse the membrane as a helical segment. Residues 315–335 (FSLALKCLISLSTIILLGLII) form a helical membrane-spanning segment. Residues 366–386 (ISLEMLVCAIHPIPGEYKFFW) form a helical membrane-spanning segment. A helical transmembrane segment spans residues 405–425 (IILSIPMFLRLYLIARVMLLH). The helical transmembrane segment at 454–474 (LMTICPGTVLLVFSISLWIIA) threads the bilayer. Residues 494 to 514 (FLGAMWLISITFLSIGYGDMV) constitute an intramembrane region (pore-forming). A helical membrane pass occupies residues 523-543 (VCLLTGIMGAGCTALVVAVVA). The segment at 561–637 (DTQLTKRIKN…LVDLSKMQNV (77 aa)) is calmodulin-binding. Residues 642–669 (ITELNDRSEDLEKQIGSLESKLEHLTAS) adopt a coiled-coil conformation. Residues 709–731 (ISDSPIGVSSTSFPTPYTSSSSC) form a disordered region. The segment covering 717 to 731 (SSTSFPTPYTSSSSC) has biased composition (low complexity).

Belongs to the potassium channel KCNN family. KCa2.3/KCNN3 subfamily. Homodimer. Heteromultimer with KCNN2 or KCNN1; this modulates plasma membrane expression and consequently the small conductance calcium-activated potassium channel activity. The complex is composed of 4 channel subunits each of which binds to a calmodulin subunit which regulates the channel activity through calcium-binding. Interacts with CALM1. As to expression, widely distributed in human tissues and is present at 20-60% of KCNN3 in the brain.

The protein localises to the cell membrane. It is found in the cytoplasm. Its subcellular location is the myofibril. It localises to the sarcomere. The protein resides in the z line. The enzyme catalyses K(+)(in) = K(+)(out). Inhibited by bee venom neurotoxin apamin. Small conductance calcium-activated potassium channel that mediates the voltage-independent transmembrane transfer of potassium across the cell membrane through a constitutive interaction with calmodulin which binds the intracellular calcium allowing its opening. The current is characterized by a voltage-independent activation, an intracellular calcium concentration increase-dependent activation and a single-channel conductance of 10 picosiemens. Also presents an inwardly rectifying current, thus reducing its already small outward conductance of potassium ions, which is particularly the case when the membrane potential displays positive values, above + 20 mV. Activation is followed by membrane hyperpolarization. Thought to regulate neuronal excitability by contributing to the slow component of synaptic afterhyperpolarization. In terms of biological role, does not function as a small conductance calcium-activated potassium channel. Selectively suppresses endogenous KCNN3 currents, in a dominant-negative fashion by decreasing the abundance of functional channels in the plasma membrane, possibly by selectively coassembling with and sequestering native KCNN3 protein in intracellular compartments. This dominant inhibitory effect extends to other members of the SK subfamily. The protein is Small conductance calcium-activated potassium channel protein 3 of Homo sapiens (Human).